Reading from the N-terminus, the 145-residue chain is UPF0201 protein SSO1042 (145 aa).

This sequence belongs to the UPF0201 family.

In Saccharolobus solfataricus (strain ATCC 35092 / DSM 1617 / JCM 11322 / P2) (Sulfolobus solfataricus), this protein is UPF0201 protein SSO1042.